The primary structure comprises 477 residues: Delayed-rectifier potassium channel regulatory subunit KCNS2 (477 aa).

Residues 1–184 (MTGQSLWDVS…LALDNPGYSV (184 aa)) lie on the Cytoplasmic side of the membrane. The helical transmembrane segment at 185-206 (LSRVFSILSILVVMGSIITMCL) threads the bilayer. Topologically, residues 207-225 (NSLPDFQIPDSQGNPGEDP) are extracellular. A helical transmembrane segment spans residues 226 to 248 (RFEIVEHFGIAWFTFELVARFAV). Residues 249–259 (APDFLKFFKNA) lie on the Cytoplasmic side of the membrane. Residues 260–280 (LNLIDLMSIVPFYITLVVNLV) form a helical membrane-spanning segment. The Extracellular portion of the chain corresponds to 281-290 (VESTPTLANL). The helical; Voltage-sensor transmembrane segment at 291 to 311 (GRVAQVLRLMRIFRILKLARH) threads the bilayer. The Cytoplasmic portion of the chain corresponds to 312 to 326 (STGLRSLGATLKYSY). The chain crosses the membrane as a helical span at residues 327–348 (KEVGLLLLYLSVGISIFSVVAY). Over 349-361 (TIEKEENEGLATI) the chain is Extracellular. The segment at residues 362-373 (PACWWWATVSMT) is an intramembrane region (helical). The Selectivity filter signature appears at 374–379 (TVGYGD). Residues 374 to 381 (TVGYGDVV) lie within the membrane without spanning it. The Extracellular portion of the chain corresponds to 382-388 (PGTTAGK). A helical transmembrane segment spans residues 389–417 (LTASACILAGILVVVLPITLIFNKFSHFY). At 418 to 477 (RRQKQLESAMRSCDFGDGMKEVPSVNLRDYYAHKVKSLMASLTNMSRSSPSELSLNDSLR) the chain is on the cytoplasmic side.

The protein belongs to the potassium channel family. S (TC 1.A.1.2) subfamily. Kv9.2/KCNS2 sub-subfamily. As to quaternary structure, heterotetramer with KCNB1 and KCNB2. Does not form homomultimers.

Its subcellular location is the cell membrane. Potassium channel regulatory subunit that modulate the delayed rectifier voltage-gated potassium channel activity of KCNB1 and KCNB2 by altering their kinetics, expression levels, and shifting the half-inactivation potential to more polarized values. While it does not form functional channels on its own, it can form functional heterotetrameric channels with KCNB1 and KCNB2. Each regulatory subunit has unique regulatory properties that can lead to extensive inhibition, significant changes in kinetics, and/or substantial shifts in the voltage dependencies of the inactivation process. This Homo sapiens (Human) protein is Delayed-rectifier potassium channel regulatory subunit KCNS2.